Reading from the N-terminus, the 101-residue chain is Interleukin-8 (101 aa).

The signal sequence occupies residues 1 to 22; that stretch reads MTSKLVVALLAAFMLSAALCEA. R27 bears the Citrulline mark. 2 disulfide bridges follow: C34–C61 and C36–C77.

Belongs to the intercrine alpha (chemokine CxC) family. In terms of assembly, homodimer. Interacts with TNFAIP6 (via Link domain); this interaction interferes with chemokine binding to glycosaminoglycans. Citrullination at Arg-27 prevents proteolysis, and dampens tissue inflammation, it also enhances leukocytosis, possibly through impaired chemokine clearance from the blood circulation.

It localises to the secreted. Functionally, chemotactic factor that mediates inflammatory response by attracting neutrophils, basophils, and T-cells to clear pathogens and protect the host from infection. Also plays an important role in neutrophil activation. Released in response to an inflammatory stimulus, exerts its effect by binding to the G-protein-coupled receptors CXCR1 and CXCR2, primarily found in neutrophils, monocytes and endothelial cells. G-protein heterotrimer (alpha, beta, gamma subunits) constitutively binds to CXCR1/CXCR2 receptor and activation by IL8 leads to beta and gamma subunits release from Galpha (GNAI2 in neutrophils) and activation of several downstream signaling pathways including PI3K and MAPK pathways. The polypeptide is Interleukin-8 (CXCL8) (Felis catus (Cat)).